Consider the following 310-residue polypeptide: 4-diphosphocytidyl-2-C-methyl-D-erythritol kinase (310 aa).

Lysine 10 is a catalytic residue. Position 102-112 (102-112 (PVAGGMAGGSA)) interacts with ATP. Aspartate 144 is an active-site residue. The disordered stretch occupies residues 289 to 310 (TRTARGPAAGAQLLPGPVGSFA).

Belongs to the GHMP kinase family. IspE subfamily.

It catalyses the reaction 4-CDP-2-C-methyl-D-erythritol + ATP = 4-CDP-2-C-methyl-D-erythritol 2-phosphate + ADP + H(+). It participates in isoprenoid biosynthesis; isopentenyl diphosphate biosynthesis via DXP pathway; isopentenyl diphosphate from 1-deoxy-D-xylulose 5-phosphate: step 3/6. In terms of biological role, catalyzes the phosphorylation of the position 2 hydroxy group of 4-diphosphocytidyl-2C-methyl-D-erythritol. This Cutibacterium acnes (strain DSM 16379 / KPA171202) (Propionibacterium acnes) protein is 4-diphosphocytidyl-2-C-methyl-D-erythritol kinase.